The following is a 288-amino-acid chain: Bifunctional protein FolD 1 (288 aa).

NADP(+)-binding positions include 170 to 172 (GPG) and isoleucine 236.

It belongs to the tetrahydrofolate dehydrogenase/cyclohydrolase family. Homodimer.

It carries out the reaction (6R)-5,10-methylene-5,6,7,8-tetrahydrofolate + NADP(+) = (6R)-5,10-methenyltetrahydrofolate + NADPH. It catalyses the reaction (6R)-5,10-methenyltetrahydrofolate + H2O = (6R)-10-formyltetrahydrofolate + H(+). It participates in one-carbon metabolism; tetrahydrofolate interconversion. Its function is as follows. Catalyzes the oxidation of 5,10-methylenetetrahydrofolate to 5,10-methenyltetrahydrofolate and then the hydrolysis of 5,10-methenyltetrahydrofolate to 10-formyltetrahydrofolate. The polypeptide is Bifunctional protein FolD 1 (Deinococcus geothermalis (strain DSM 11300 / CIP 105573 / AG-3a)).